Reading from the N-terminus, the 62-residue chain is Large ribosomal subunit protein eL24 (62 aa).

4 residues coordinate Zn(2+): Cys7, Cys10, Cys33, and Cys37. The C4-type zinc-finger motif lies at 7-37; sequence CSFCGKDILPGTGLMYVRNDGSLLWFCSSKC.

This sequence belongs to the eukaryotic ribosomal protein eL24 family. In terms of assembly, part of the 50S ribosomal subunit. Forms a cluster with proteins L3 and L14. Requires Zn(2+) as cofactor.

Binds to the 23S rRNA. The protein is Large ribosomal subunit protein eL24 of Sulfolobus acidocaldarius (strain ATCC 33909 / DSM 639 / JCM 8929 / NBRC 15157 / NCIMB 11770).